The sequence spans 249 residues: Methyl-coenzyme M reductase I subunit gamma (249 aa).

Residue Arg-120 coordinates coenzyme M.

This sequence belongs to the methyl-coenzyme M reductase gamma subunit family. MCR is a hexamer of two alpha, two beta, and two gamma chains, forming a dimer of heterotrimers. Coenzyme F430 is required as a cofactor.

The protein localises to the cytoplasm. It catalyses the reaction coenzyme B + methyl-coenzyme M = methane + coenzyme M-coenzyme B heterodisulfide. Its pathway is one-carbon metabolism; methyl-coenzyme M reduction; methane from methyl-coenzyme M: step 1/1. Functionally, component of the methyl-coenzyme M reductase (MCR) I that catalyzes the reductive cleavage of methyl-coenzyme M (CoM-S-CH3 or 2-(methylthio)ethanesulfonate) using coenzyme B (CoB or 7-mercaptoheptanoylthreonine phosphate) as reductant which results in the production of methane and the mixed heterodisulfide of CoB and CoM (CoM-S-S-CoB). This is the final step in methanogenesis. This chain is Methyl-coenzyme M reductase I subunit gamma (mcrG), found in Methanothermobacter thermautotrophicus (strain ATCC 29096 / DSM 1053 / JCM 10044 / NBRC 100330 / Delta H) (Methanobacterium thermoautotrophicum).